Consider the following 443-residue polypeptide: Xaa-Pro dipeptidase (443 aa).

Positions 246, 257, 339, 384, and 423 each coordinate Mn(2+).

The protein belongs to the peptidase M24B family. Bacterial-type prolidase subfamily. Requires Mn(2+) as cofactor.

It carries out the reaction Xaa-L-Pro dipeptide + H2O = an L-alpha-amino acid + L-proline. Functionally, splits dipeptides with a prolyl residue in the C-terminal position. This chain is Xaa-Pro dipeptidase, found in Shigella flexneri.